The primary structure comprises 292 residues: Tissue factor (292 aa).

Residues 1–35 (MATPNGPRVPCPQAAVARALLFGLVLIQGAGVAGT) form the signal peptide. The Extracellular portion of the chain corresponds to 36 to 248 (TDVVVAYNIT…TSHEKVLSTE (213 aa)). An N-linked (GlcNAc...) asparagine glycan is attached at N43. Positions 46 to 48 (WKS) match the WKS motif motif. C81 and C89 are disulfide-bonded. Residues N153 and N181 are each glycosylated (N-linked (GlcNAc...) asparagine). C215 and C238 form a disulfide bridge. A helical transmembrane segment spans residues 249-271 (LFFIIGTVMLVIIIFIVVLSVSL). The Cytoplasmic segment spans residues 272–292 (HKCRKVRAERSGKENTPLNAA). The S-palmitoyl cysteine moiety is linked to residue C274.

This sequence belongs to the tissue factor family. As to quaternary structure, interacts with HSPE; the interaction, inhibited by heparin, promotes the generation of activated factor X and activates coagulation in the presence of activated factor VII.

It localises to the membrane. Its function is as follows. Initiates blood coagulation by forming a complex with circulating factor VII or VIIa. The [TF:VIIa] complex activates factors IX or X by specific limited proteolysis. TF plays a role in normal hemostasis by initiating the cell-surface assembly and propagation of the coagulation protease cascade. The chain is Tissue factor (F3) from Bos taurus (Bovine).